Consider the following 52-residue polypeptide: uncharacterized protein (52 aa).

The helical transmembrane segment at 7–27 (MFQLFVFIIFAAVVFAAVTGF) threads the bilayer.

The protein localises to the membrane. This is an uncharacterized protein from Bacillus subtilis (strain 168).